The chain runs to 566 residues: Insulinoma-associated protein 2 (566 aa).

Residues 1-20 (MPRGFLVKRTKRTGGLYRVR) are SNAG domain. The segment at 32–117 (QGAPPFLEEA…PSPSPAKPAG (86 aa)) is disordered. The segment covering 103 to 113 (GPSPSPSPSPA) has biased composition (pro residues). The segment at 263 to 283 (FICQLCKEQYADPFALAQHRC) adopts a C2H2-type 1; atypical zinc-finger fold. The C2H2-type 2 zinc-finger motif lies at 291–313 (YRCPECDKVFSCPANLASHRRWH). The interval 310 to 418 (RRWHKPRPAA…RRVPVPGSTS (109 aa)) is disordered. Over residues 318 to 348 (AAANAATVSSADGKPPSSSSSSSRDSGAIAS) the composition is skewed to low complexity. The segment covering 352-369 (EGKENSRIERTADQHPQA) has biased composition (basic and acidic residues). 3 C2H2-type zinc fingers span residues 426 to 448 (FVCP…LSTH), 470 to 492 (FACP…RLWH), and 525 to 548 (FSCK…NKCH).

In terms of tissue distribution, expressed in heart, liver, skeletal muscle, kidney and pancreas, and, to a lesser extent, in brain, lung and spleen. In the pancreas, expressed in islet cells, including insulin- and glucagon-producing alpha- and beta-cells, but not in acinar cells (at protein level). Detected in adrenal glands, particularly in the deeper layer of the cortex (at protein level).

The protein resides in the cytoplasm. The protein localises to the nucleus. Functionally, may function as a growth suppressor or tumor suppressor in liver cells and in certain neurons. The sequence is that of Insulinoma-associated protein 2 (INSM2) from Homo sapiens (Human).